The chain runs to 166 residues: MTEALPFWKTKHLTELTREEWESLCDGCGRCCLHKLRDEETEELAFTNVSCRLLDTQSCRCTSYATRFRKVPDCISLTPALVAEIDWLPPSCAYRIVLNGKDLPWWHPLVSGDPETVHQAGISVRGRAIDEREAGPLEDYIVSWPGRFPRPRRPRQEPAGKTADES.

The segment at 147-166 (RFPRPRRPRQEPAGKTADES) is disordered. Residues 154-166 (PRQEPAGKTADES) are compositionally biased toward basic and acidic residues.

Belongs to the UPF0260 family.

In Granulibacter bethesdensis (strain ATCC BAA-1260 / CGDNIH1), this protein is UPF0260 protein GbCGDNIH1_2046.